Consider the following 428-residue polypeptide: Glutamate-1-semialdehyde 2,1-aminomutase (428 aa).

The residue at position 267 (Lys-267) is an N6-(pyridoxal phosphate)lysine.

The protein belongs to the class-III pyridoxal-phosphate-dependent aminotransferase family. HemL subfamily. Homodimer. Pyridoxal 5'-phosphate serves as cofactor.

Its subcellular location is the cytoplasm. The enzyme catalyses (S)-4-amino-5-oxopentanoate = 5-aminolevulinate. The protein operates within porphyrin-containing compound metabolism; protoporphyrin-IX biosynthesis; 5-aminolevulinate from L-glutamyl-tRNA(Glu): step 2/2. The polypeptide is Glutamate-1-semialdehyde 2,1-aminomutase (Flavobacterium johnsoniae (strain ATCC 17061 / DSM 2064 / JCM 8514 / BCRC 14874 / CCUG 350202 / NBRC 14942 / NCIMB 11054 / UW101) (Cytophaga johnsonae)).